We begin with the raw amino-acid sequence, 513 residues long: ATP synthase subunit alpha 2 (513 aa).

169–176 (GDRQTGKT) lines the ATP pocket.

It belongs to the ATPase alpha/beta chains family. F-type ATPases have 2 components, CF(1) - the catalytic core - and CF(0) - the membrane proton channel. CF(1) has five subunits: alpha(3), beta(3), gamma(1), delta(1), epsilon(1). CF(0) has three main subunits: a(1), b(2) and c(9-12). The alpha and beta chains form an alternating ring which encloses part of the gamma chain. CF(1) is attached to CF(0) by a central stalk formed by the gamma and epsilon chains, while a peripheral stalk is formed by the delta and b chains.

It is found in the cell inner membrane. The enzyme catalyses ATP + H2O + 4 H(+)(in) = ADP + phosphate + 5 H(+)(out). Produces ATP from ADP in the presence of a proton gradient across the membrane. The alpha chain is a regulatory subunit. The chain is ATP synthase subunit alpha 2 from Shewanella frigidimarina (strain NCIMB 400).